The sequence spans 292 residues: Elongation factor Ts (292 aa).

Residues 79–82 (TDFV) form an involved in Mg(2+) ion dislocation from EF-Tu region.

This sequence belongs to the EF-Ts family.

The protein localises to the cytoplasm. Functionally, associates with the EF-Tu.GDP complex and induces the exchange of GDP to GTP. It remains bound to the aminoacyl-tRNA.EF-Tu.GTP complex up to the GTP hydrolysis stage on the ribosome. This is Elongation factor Ts from Metamycoplasma arthritidis (strain 158L3-1) (Mycoplasma arthritidis).